Consider the following 479-residue polypeptide: PRAME family member 18 (479 aa).

An LRR 1 repeat occupies 15 to 38 (QSLLRDQALAISVLDELPRELFPP). The stretch at 97–124 (RWKLQVLEMRDVDENFWTIWSGARLLSC) is one LRR 1; degenerate repeat. One copy of the LRR 2; degenerate repeat lies at 179-203 (HLCCTKVVNYSMSILNFRNILETVY). An LRR 3; degenerate repeat occupies 204-230 (PDSIQVLEIWNMCWLCMIVEFSRYLSQ). The LRR 4; degenerate repeat unit spans residues 231-265 (MRNLRKLFISDGCRYLLSSDSQEQLVAEFSSVLLR). 5 LRR repeats span residues 266–291 (LENL…IRCL), 292–323 (RSPL…SQLK), 324–342 (QLNL…PLRA), 348–375 (AATL…ALSR), and 376–400 (CSNL…LLRH).

Belongs to the PRAME family.

The protein is PRAME family member 18 of Homo sapiens (Human).